The chain runs to 82 residues: Small ribosomal subunit protein bS16 (82 aa).

This sequence belongs to the bacterial ribosomal protein bS16 family.

This chain is Small ribosomal subunit protein bS16, found in Dehalococcoides mccartyi (strain ATCC BAA-2100 / JCM 16839 / KCTC 5957 / BAV1).